The primary structure comprises 131 residues: Small ribosomal subunit protein bS6 (131 aa).

The disordered stretch occupies residues 98–131 (EASPMARARDERDSRRGPAGERSYDEAHAEEIGE). Basic and acidic residues predominate over residues 104–131 (RARDERDSRRGPAGERSYDEAHAEEIGE).

The protein belongs to the bacterial ribosomal protein bS6 family.

In terms of biological role, binds together with bS18 to 16S ribosomal RNA. This is Small ribosomal subunit protein bS6 from Shewanella putrefaciens (strain CN-32 / ATCC BAA-453).